The chain runs to 320 residues: R2-like ligand binding oxidase (320 aa).

The Mn(2+) site is built by glutamate 68, glutamate 101, and histidine 104. Positions 71 to 162 (VTKDIQPFMS…AAQVRASVVY (92 aa)) form a cross-link, 3-(O4'-tyrosyl)-valine (Val-Tyr). Position 101 (glutamate 101) interacts with Fe cation. The Fe cation site is built by glutamate 167, glutamate 202, and histidine 205.

It belongs to the ribonucleoside diphosphate reductase small chain family. R2-like ligand binding oxidase subfamily. In terms of assembly, homodimer. Fe cation is required as a cofactor. The cofactor is Mn(2+).

Functionally, probable oxidase that might be involved in lipid metabolism. This Mycolicibacterium smegmatis (strain ATCC 700084 / mc(2)155) (Mycobacterium smegmatis) protein is R2-like ligand binding oxidase (nrdB).